The chain runs to 1054 residues: Leucine-rich repeats and immunoglobulin-like domains protein 2 (1054 aa).

A signal peptide spans M1 to A39. Residues G40–S74 form the LRRNT domain. LRR repeat units lie at residues D75–Q96, T97–T118, N120–L141, A144–R165, S167–N188, S192–L213, H215–G236, S239–G260, N263–G284, M287–F308, R311–G332, L335–F356, N359–F381, S386–G407, and S410–Q431. N90 carries N-linked (GlcNAc...) asparagine glycosylation. N-linked (GlcNAc...) asparagine glycosylation occurs at N120. Residues N172 and N188 are each glycosylated (N-linked (GlcNAc...) asparagine). N-linked (GlcNAc...) asparagine glycosylation occurs at N273. N440, N467, N513, N570, and N588 each carry an N-linked (GlcNAc...) asparagine glycan. The 52-residue stretch at S442 to D493 folds into the LRRCT domain. Ig-like C2-type domains are found at residues P497–T596, P601–T690, and P695–S784. A disulfide bridge connects residues C518 and C579. A disulfide bridge connects residues C622 and C674. 2 N-linked (GlcNAc...) asparagine glycosylation sites follow: N686 and N727. Cysteines 716 and 765 form a disulfide. Residues I807 to I827 traverse the membrane as a helical segment. Y905 carries the post-translational modification Phosphotyrosine. An N-linked (GlcNAc...) asparagine glycan is attached at N1024.

Its subcellular location is the cell membrane. It localises to the cytoplasm. This Mus musculus (Mouse) protein is Leucine-rich repeats and immunoglobulin-like domains protein 2 (Lrig2).